Consider the following 440-residue polypeptide: Transposon Ty1-PR3 Gag polyprotein (440 aa).

Polar residues-rich tracts occupy residues 1 to 23 (MESQ…SVTS), 48 to 60 (TKAN…TPAS), and 127 to 152 (QSQF…GNTF). 3 disordered regions span residues 1–93 (MESQ…MMTQ), 126–173 (PQSQ…RPPP), and 352–440 (GSRN…PGTY). Positions 153-165 (TDSSSADSDMTST) are enriched in low complexity. Residues 299–401 (NNGIHINNKV…NSKSKTARAH (103 aa)) are RNA-binding. Residues 402–418 (NVSTSNNSPSTDNDSIS) are compositionally biased toward low complexity. Residue S416 is modified to Phosphoserine. Over residues 419–428 (KSTTEPIQLN) the composition is skewed to polar residues. Basic and acidic residues predominate over residues 429 to 440 (NKHDLHLRPGTY).

Homotrimer.

The protein localises to the cytoplasm. In terms of biological role, capsid protein (CA) is the structural component of the virus-like particle (VLP), forming the shell that encapsulates the retrotransposons dimeric RNA genome. The particles are assembled from trimer-clustered units and there are holes in the capsid shells that allow for the diffusion of macromolecules. CA also has nucleocapsid-like chaperone activity, promoting primer tRNA(i)-Met annealing to the multipartite primer-binding site (PBS), dimerization of Ty1 RNA and initiation of reverse transcription. The polypeptide is Transposon Ty1-PR3 Gag polyprotein (TY1A-PR3) (Saccharomyces cerevisiae (strain ATCC 204508 / S288c) (Baker's yeast)).